The sequence spans 409 residues: NADH-quinone oxidoreductase subunit D (409 aa).

Belongs to the complex I 49 kDa subunit family. As to quaternary structure, NDH-1 is composed of 14 different subunits. Subunits NuoB, C, D, E, F, and G constitute the peripheral sector of the complex.

The protein resides in the cell inner membrane. The enzyme catalyses a quinone + NADH + 5 H(+)(in) = a quinol + NAD(+) + 4 H(+)(out). Functionally, NDH-1 shuttles electrons from NADH, via FMN and iron-sulfur (Fe-S) centers, to quinones in the respiratory chain. The immediate electron acceptor for the enzyme in this species is believed to be ubiquinone. Couples the redox reaction to proton translocation (for every two electrons transferred, four hydrogen ions are translocated across the cytoplasmic membrane), and thus conserves the redox energy in a proton gradient. The sequence is that of NADH-quinone oxidoreductase subunit D from Campylobacter curvus (strain 525.92).